A 483-amino-acid chain; its full sequence is MLTLDTLNVMLAVSEEGLIEEMIIALLASPQLAVFFEKFPRLKAAITDDVPRWREALRRRLKDARVPPELTEEVMCYQQSQLLSTPQFIVQLPQILDLLHRLNSPWAEQACQLVDANSTITSALHTLFLQRWRLSLIVQATTLNQQLLEEEREQLLSEVQERMTLSGQLEPILADNNTAAGRLWDMSAGQLKRGDYQLIVKYGEFLNEQPELKRLAEQLGRSREAKSIPRNDAQMETFRTMVREPATVPEQVDGLQQSDDILRLLPPELATLGITELEYEFYRRLVEKQLLTYRLHGESWREKVIERPVVHKDYDEQPRGPFIVCVDTSGSMGGFNEQCAKAFCLALMRIALAENRRCYIMLFSTEIVRYELSGPQGIEQAIRFLSQQFRGGTDLASCFRAIMERLQSREWFDADAVVISDFIAQRLPDDVTSKVKELQRVHQHRFHAVAMSAHGKPGIMRIFDHIWRFDTGMRSRLLRRWRR.

This sequence belongs to the ViaA family. Homodimer. Interacts with RavA.

It localises to the cytoplasm. In terms of biological role, component of the RavA-ViaA chaperone complex, which may act on the membrane to optimize the function of some of the respiratory chains. ViaA stimulates the ATPase activity of RavA. The chain is Regulatory protein ViaA from Escherichia coli O127:H6 (strain E2348/69 / EPEC).